A 509-amino-acid chain; its full sequence is uncharacterized protein (509 aa).

The protein belongs to the MG032/MG096/MG288 family.

This is an uncharacterized protein from Mycoplasma pneumoniae (strain ATCC 29342 / M129 / Subtype 1) (Mycoplasmoides pneumoniae).